Here is a 188-residue protein sequence, read N- to C-terminus: Ribosomal RNA small subunit methyltransferase G (188 aa).

Residues G69, F74, 119–120 (VQ), and R134 contribute to the S-adenosyl-L-methionine site.

The protein belongs to the methyltransferase superfamily. RNA methyltransferase RsmG family.

It localises to the cytoplasm. It catalyses the reaction guanosine(527) in 16S rRNA + S-adenosyl-L-methionine = N(7)-methylguanosine(527) in 16S rRNA + S-adenosyl-L-homocysteine. Specifically methylates the N7 position of guanine in position 527 of 16S rRNA. The polypeptide is Ribosomal RNA small subunit methyltransferase G (Campylobacter jejuni subsp. jejuni serotype O:23/36 (strain 81-176)).